Reading from the N-terminus, the 68-residue chain is Large ribosomal subunit protein bL35 (68 aa).

It belongs to the bacterial ribosomal protein bL35 family.

This Wolbachia pipientis subsp. Culex pipiens (strain wPip) protein is Large ribosomal subunit protein bL35.